The following is a 430-amino-acid chain: ATP-dependent RNA helicase RhlB (430 aa).

Positions 9–37 (QKFSDFALHPQVIEALESKGFHYCTPIQA) match the Q motif motif. Residues 40–219 (LPLTLSGRDV…FEQMNNAEYV (180 aa)) form the Helicase ATP-binding domain. ATP is bound at residue 53 to 60 (AQTGTGKT). The DEAD box signature appears at 165–168 (DEAD). Residues 245-390 (RLLQTLLEEE…LSKYNSDALM (146 aa)) enclose the Helicase C-terminal domain. Residues 392–430 (DLPAPKRLTRPPRSNNGPRRHNSAPRRSGAPRNNRKRAD) are disordered.

This sequence belongs to the DEAD box helicase family. RhlB subfamily. As to quaternary structure, component of the RNA degradosome, which is a multiprotein complex involved in RNA processing and mRNA degradation.

The protein localises to the cytoplasm. The enzyme catalyses ATP + H2O = ADP + phosphate + H(+). DEAD-box RNA helicase involved in RNA degradation. Has RNA-dependent ATPase activity and unwinds double-stranded RNA. In Pectobacterium atrosepticum (strain SCRI 1043 / ATCC BAA-672) (Erwinia carotovora subsp. atroseptica), this protein is ATP-dependent RNA helicase RhlB.